The following is a 349-amino-acid chain: Anaerobic nitrite reductase Glb1-3 (349 aa).

2 consecutive Globin domains span residues glycine 13–lysine 162 and cysteine 184–lysine 333. Residues serine 56, lysine 70, histidine 74, lysine 104, threonine 108, histidine 109, serine 227, lysine 241, histidine 245, lysine 275, threonine 279, and histidine 280 each coordinate heme b.

Belongs to the plant globin family. Monomer. It depends on heme b as a cofactor.

It localises to the cytoplasm. The protein resides in the nucleus. It catalyses the reaction Fe(III)-heme b-[protein] + nitric oxide + H2O = Fe(II)-heme b-[protein] + nitrite + 2 H(+). Its function is as follows. Phytoglobin that regulates the fine tuning of nitric oxide (NO) concentration in the cytosol in response to sudden changes in O(2) availability, and performs both symbiotic and nonsymbiotic functions. Exhibits NO dioxygenase activity in the presence of O(2) but nitrite reductase (NiR) activity in the absence of O(2) (e.g. during flooding or in waterlogged soil). May not function as an oxygen storage or transport protein. Extremely reactive toward the physiological ligands O(2), nitric oxide (NO), and nitrite with a very high affinity for O(2) through an hexacoordinate heme iron because of a very low dissociation constant. The sequence is that of Anaerobic nitrite reductase Glb1-3 from Medicago truncatula (Barrel medic).